A 196-amino-acid chain; its full sequence is ATP-dependent Clp protease proteolytic subunit (196 aa).

The active-site Nucleophile is Ser101. His126 is a catalytic residue.

Belongs to the peptidase S14 family. Component of the chloroplastic Clp protease core complex.

It localises to the plastid. Its subcellular location is the chloroplast stroma. The enzyme catalyses Hydrolysis of proteins to small peptides in the presence of ATP and magnesium. alpha-casein is the usual test substrate. In the absence of ATP, only oligopeptides shorter than five residues are hydrolyzed (such as succinyl-Leu-Tyr-|-NHMec, and Leu-Tyr-Leu-|-Tyr-Trp, in which cleavage of the -Tyr-|-Leu- and -Tyr-|-Trp bonds also occurs).. Functionally, cleaves peptides in various proteins in a process that requires ATP hydrolysis. Has a chymotrypsin-like activity. Plays a major role in the degradation of misfolded proteins. This is ATP-dependent Clp protease proteolytic subunit from Atropa belladonna (Belladonna).